The primary structure comprises 107 residues: uncharacterized protein (107 aa).

Transmembrane regions (helical) follow at residues 15 to 35 (TGSY…LGIS), 43 to 63 (LYRV…WLSY), and 87 to 107 (YFPS…IFCF).

It is found in the membrane. This is an uncharacterized protein from Saccharomyces cerevisiae (strain ATCC 204508 / S288c) (Baker's yeast).